Here is a 395-residue protein sequence, read N- to C-terminus: Type II restriction enzyme BsuFI (395 aa).

Homodimer. Mg(2+) is required as a cofactor.

It catalyses the reaction Endonucleolytic cleavage of DNA to give specific double-stranded fragments with terminal 5'-phosphates.. Functionally, a P subtype restriction enzyme that recognizes the double-stranded sequence 5'-CCGG-3' and cleaves after C-1. This chain is Type II restriction enzyme BsuFI (hsdFR), found in Bacillus subtilis.